The chain runs to 126 residues: Fluoride-specific ion channel FluC (126 aa).

A run of 4 helical transmembrane segments spans residues 7 to 24 (LWVSLGGIVGACARYFLS), 35 to 55 (FPWGTLLINITGSFVLGLFLV), 69 to 89 (LLIAIGFCGAYTTFSSYAYES), and 98 to 118 (WGLFAGNVLANNILCLAAVLG). Na(+)-binding residues include Gly77 and Thr80.

It belongs to the fluoride channel Fluc/FEX (TC 1.A.43) family.

Its subcellular location is the cell inner membrane. The enzyme catalyses fluoride(in) = fluoride(out). With respect to regulation, na(+) is not transported, but it plays an essential structural role and its presence is essential for fluoride channel function. In terms of biological role, fluoride-specific ion channel. Important for reducing fluoride concentration in the cell, thus reducing its toxicity. The protein is Fluoride-specific ion channel FluC of Koribacter versatilis (strain Ellin345).